Consider the following 583-residue polypeptide: MSINTDESTWRTFKRLWTFIRLYKSGLAVAVVALIINAVSDTYMVSLLKPLLDEGFGSAESDFLRTLPLLVFGLMFIRGISSFVSTYCLSWVSGNVVMQVRRMVFNHYMQMPVSYFDKEKSGSLLSRITYDSEQVSAATSQALVSIVREGTSIIGLLVLMFYNSWQLSLVLILVAPVVAWAIGFVSKRFRKISKNMQTTMGIVTSSAEQMLKGHKVVLSYGGQEVEKSRFDVVSNQMRQQSMKLITAQAAANPIIQMIASIAIVVVLYLASVDTIKDQLTPGTFTVVFSAMFGLMRPLKALTNVTSQFQRGMAAAQTLFALVDLEPEKNTGTYSVERAKGEVNVKDISFTYEGAEKPALSHVSFDIPRGKTVALVGRSGSGKSTIANLFTRFYDVDSGEIQLDGVDVRDYELKNLRTQFALVSQNVHLFNDTIANNIAYAAGDKYSREDIERAAELAHAMEFISKMENGLDTMVGENGASLSGGQRQRVAIARALLRDAPVLILDEATSALDTESERAIQSALDELQKNKTVLVIAHRLSTIEKADQILVIDDGSVVERGSHSELIEKDGAYAQLHRIQFGEG.

5 consecutive transmembrane segments (helical) span residues 27-47 (LAVAVVALIINAVSDTYMVSL), 69-89 (LLVFGLMFIRGISSFVSTYCL), 142-162 (ALVSIVREGTSIIGLLVLMFY), 165-185 (WQLSLVLILVAPVVAWAIGFV), and 249-269 (AAANPIIQMIASIAIVVVLYL). Residues 28–310 (AVAVVALIIN…LTNVTSQFQR (283 aa)) form the ABC transmembrane type-1 domain. The ABC transporter domain occupies 342–578 (VNVKDISFTY…DGAYAQLHRI (237 aa)). Residue 376-383 (GRSGSGKS) coordinates ATP.

The protein belongs to the ABC transporter superfamily. Lipid exporter (TC 3.A.1.106) family. Homodimer.

Its subcellular location is the cell inner membrane. It catalyses the reaction ATP + H2O + lipid A-core oligosaccharideSide 1 = ADP + phosphate + lipid A-core oligosaccharideSide 2.. Functionally, involved in lipopolysaccharide (LPS) biosynthesis. Translocates lipid A-core from the inner to the outer leaflet of the inner membrane. Transmembrane domains (TMD) form a pore in the inner membrane and the ATP-binding domain (NBD) is responsible for energy generation. The chain is ATP-dependent lipid A-core flippase from Vibrio vulnificus (strain CMCP6).